A 1454-amino-acid polypeptide reads, in one-letter code: Coiled-coil domain-containing protein 18 (1454 aa).

A Phosphoserine modification is found at Ser-45. Coiled coils occupy residues 107-138 (APVD…HSLM), 170-402 (ILEE…ISQL), 438-464 (KLVI…NLTA), and 508-1309 (TMNK…SGHE). A disordered region spans residues 828-851 (QKQRESSAEKLRKMEEKCESAAHE). Phosphoserine is present on Ser-1355.

Its subcellular location is the cytoplasm. It is found in the cytoskeleton. The protein resides in the microtubule organizing center. The protein localises to the centrosome. It localises to the centriolar satellite. The sequence is that of Coiled-coil domain-containing protein 18 (CCDC18) from Homo sapiens (Human).